The primary structure comprises 157 residues: Lipoprotein signal peptidase (157 aa).

3 helical membrane passes run 10–30 (LIFI…KYAI), 58–78 (FLEG…FIFL), and 84–104 (LFKN…SNVL). Catalysis depends on residues Asp114 and Asp131. The helical transmembrane segment at 122–142 (FDFAIFNFADVMIDVGVGVLL) threads the bilayer.

The protein belongs to the peptidase A8 family.

The protein resides in the cell inner membrane. It carries out the reaction Release of signal peptides from bacterial membrane prolipoproteins. Hydrolyzes -Xaa-Yaa-Zaa-|-(S,diacylglyceryl)Cys-, in which Xaa is hydrophobic (preferably Leu), and Yaa (Ala or Ser) and Zaa (Gly or Ala) have small, neutral side chains.. It functions in the pathway protein modification; lipoprotein biosynthesis (signal peptide cleavage). Functionally, this protein specifically catalyzes the removal of signal peptides from prolipoproteins. In Helicobacter pylori (strain Shi470), this protein is Lipoprotein signal peptidase.